Consider the following 316-residue polypeptide: Bifunctional protein FolD (316 aa).

NADP(+)-binding positions include 165 to 167 (GKS) and isoleucine 231.

This sequence belongs to the tetrahydrofolate dehydrogenase/cyclohydrolase family. In terms of assembly, homodimer.

It carries out the reaction (6R)-5,10-methylene-5,6,7,8-tetrahydrofolate + NADP(+) = (6R)-5,10-methenyltetrahydrofolate + NADPH. It catalyses the reaction (6R)-5,10-methenyltetrahydrofolate + H2O = (6R)-10-formyltetrahydrofolate + H(+). It participates in one-carbon metabolism; tetrahydrofolate interconversion. In terms of biological role, catalyzes the oxidation of 5,10-methylenetetrahydrofolate to 5,10-methenyltetrahydrofolate and then the hydrolysis of 5,10-methenyltetrahydrofolate to 10-formyltetrahydrofolate. The chain is Bifunctional protein FolD from Sphingobium chlorophenolicum.